Here is a 309-residue protein sequence, read N- to C-terminus: Ribosomal RNA large subunit methyltransferase F (309 aa).

The disordered stretch occupies residues 1–21 (MASQHDKKSVQSGLLHPRNPH).

This sequence belongs to the methyltransferase superfamily. METTL16/RlmF family.

It localises to the cytoplasm. It catalyses the reaction adenosine(1618) in 23S rRNA + S-adenosyl-L-methionine = N(6)-methyladenosine(1618) in 23S rRNA + S-adenosyl-L-homocysteine + H(+). In terms of biological role, specifically methylates the adenine in position 1618 of 23S rRNA. In Desulfotalea psychrophila (strain LSv54 / DSM 12343), this protein is Ribosomal RNA large subunit methyltransferase F.